A 931-amino-acid polypeptide reads, in one-letter code: Bifunctional uridylyltransferase/uridylyl-removing enzyme (931 aa).

The tract at residues 1–383 (MDSVATDSKA…TTGSTWRRVP (383 aa)) is uridylyltransferase. The segment at 384–739 (ESDDFIVDNN…VGFDPARGVT (356 aa)) is uridylyl-removing. An HD domain is found at 499–622 (VDEHLIRCIG…VQSVEQMKLL (124 aa)). 2 consecutive ACT domains span residues 740 to 822 (ELTI…AVAR) and 851 to 931 (VIEV…QPAA).

Belongs to the GlnD family. Mg(2+) serves as cofactor.

It carries out the reaction [protein-PII]-L-tyrosine + UTP = [protein-PII]-uridylyl-L-tyrosine + diphosphate. The enzyme catalyses [protein-PII]-uridylyl-L-tyrosine + H2O = [protein-PII]-L-tyrosine + UMP + H(+). Its activity is regulated as follows. Uridylyltransferase (UTase) activity is inhibited by glutamine, while glutamine activates uridylyl-removing (UR) activity. Modifies, by uridylylation and deuridylylation, the PII regulatory proteins (GlnB and homologs), in response to the nitrogen status of the cell that GlnD senses through the glutamine level. Under low glutamine levels, catalyzes the conversion of the PII proteins and UTP to PII-UMP and PPi, while under higher glutamine levels, GlnD hydrolyzes PII-UMP to PII and UMP (deuridylylation). Thus, controls uridylylation state and activity of the PII proteins, and plays an important role in the regulation of nitrogen fixation and metabolism. This Bradyrhizobium sp. (strain ORS 278) protein is Bifunctional uridylyltransferase/uridylyl-removing enzyme.